The chain runs to 271 residues: MFSIQQPLLVFSDLDGTLLDSHSYDWQPAAPWLTRLREANVPVILCSSKTSAEMLYLQKTLGLQGLPLIAENGAVIQLAEQWQEIDGFPRIISGISHGEISQVLNTLREKEHFKFTTFDDVDDATIAEWTGLSRSQAALTQLHEASVTLIWRDSDERMAQFTARLNELGLQFMQGARFWHVLDASAGKDQAANWIIATYQQLSGKRPTTLGLGDGPNDAPLLEVMDYAVIVKGLNREGVHLHDEDPARVWRTQREGPEGWREGLDHFFSAR.

Asp-13 serves as the catalytic Nucleophile. Residues Asp-13, Asp-15, and Asp-214 each contribute to the Mg(2+) site.

Belongs to the HAD-like hydrolase superfamily. MPGP family. It depends on Mg(2+) as a cofactor.

It localises to the cytoplasm. The catalysed reaction is 2-O-(alpha-D-mannosyl)-3-phosphoglycerate + H2O = (2R)-2-O-(alpha-D-mannosyl)-glycerate + phosphate. The polypeptide is Mannosyl-3-phosphoglycerate phosphatase (Escherichia coli (strain 55989 / EAEC)).